A 79-amino-acid polypeptide reads, in one-letter code: Probable [Fe-S]-dependent transcriptional repressor (79 aa).

Iron-sulfur cluster-binding residues include C56, C61, C64, and C71.

This sequence belongs to the FeoC family.

Its function is as follows. May function as a transcriptional regulator that controls feoABC expression. The protein is Probable [Fe-S]-dependent transcriptional repressor of Klebsiella pneumoniae subsp. pneumoniae (strain ATCC 700721 / MGH 78578).